We begin with the raw amino-acid sequence, 147 residues long: Hemoglobin subunit epsilon (147 aa).

A Globin domain is found at 3-147; sequence HFTAEEKATV…VANALAHKYH (145 aa). A phosphoserine mark is found at Ser14 and Ser51. Positions 64 and 93 each coordinate heme b.

This sequence belongs to the globin family. In terms of assembly, heterotetramer of two alpha chains and two epsilon chains in early embryonic hemoglobin Gower-2; two zeta chains and two epsilon chains in early embryonic hemoglobin Gower-1. In terms of tissue distribution, red blood cells.

Functionally, the epsilon chain is a beta-type chain of early mammalian embryonic hemoglobin. The polypeptide is Hemoglobin subunit epsilon (HBE1) (Bradypus tridactylus (Pale-throated three-toed sloth)).